The following is an 82-amino-acid chain: Cysteine proteinase inhibitor A (82 aa).

The protein belongs to the cystatin family.

Its function is as follows. Strong inhibitor of papain and ficin but poor inhibitor of cathepsin H, B and L. The polypeptide is Cysteine proteinase inhibitor A (Helianthus annuus (Common sunflower)).